The sequence spans 178 residues: CDP-archaeol synthase (178 aa).

A run of 5 helical transmembrane segments spans residues Leu3–Val23, Phe56–Tyr76, Ile91–Ile111, Phe131–Val151, and Leu152–His172.

The protein belongs to the CDP-archaeol synthase family. It depends on Mg(2+) as a cofactor.

The protein resides in the cell membrane. The catalysed reaction is 2,3-bis-O-(geranylgeranyl)-sn-glycerol 1-phosphate + CTP + H(+) = CDP-2,3-bis-O-(geranylgeranyl)-sn-glycerol + diphosphate. Its pathway is membrane lipid metabolism; glycerophospholipid metabolism. Functionally, catalyzes the formation of CDP-2,3-bis-(O-geranylgeranyl)-sn-glycerol (CDP-archaeol) from 2,3-bis-(O-geranylgeranyl)-sn-glycerol 1-phosphate (DGGGP) and CTP. This reaction is the third ether-bond-formation step in the biosynthesis of archaeal membrane lipids. This is CDP-archaeol synthase from Methanococcus maripaludis (strain DSM 14266 / JCM 13030 / NBRC 101832 / S2 / LL).